Consider the following 780-residue polypeptide: Vezatin (780 aa).

Transmembrane regions (helical) follow at residues alanine 140–phenylalanine 160 and threonine 162–isoleucine 182. A coiled-coil region spans residues valine 430–alanine 467. Disordered stretches follow at residues aspartate 620–threonine 718 and glutamine 757–lysine 780. The segment covering serine 624–alanine 643 has biased composition (polar residues). Basic and acidic residues-rich tracts occupy residues glutamate 647–tyrosine 663 and threonine 690–alanine 699. Residues proline 702 to alanine 711 show a composition bias toward low complexity. Residues phenylalanine 761–lysine 780 are compositionally biased toward acidic residues.

It belongs to the vezatin family. Interacts with USH2A (via the cytoplasmic region); the interaction associates VEZT with the USH2 complex at the stereocilia base. Interacts with myosin MYO7A and the cadherin-catenins complex. In terms of tissue distribution, expressed in developing cochlear hair cells. Isoform 1, isoform 2 and isoform 3 are expressed in testis. In the seminiferous epithelium, present exclusively in the acrosome of spermatids (at protein level).

It is found in the cell membrane. It localises to the cell projection. Its subcellular location is the stereocilium membrane. The protein localises to the cell junction. The protein resides in the adherens junction. It is found in the nucleus. It localises to the cytoplasmic vesicle. Its subcellular location is the secretory vesicle. The protein localises to the acrosome. Functionally, plays a pivotal role in the establishment of adherens junctions and their maintenance in adult life. Required for morphogenesis of the preimplantation embryo, and for the implantation process. The chain is Vezatin from Mus musculus (Mouse).